Here is a 63-residue protein sequence, read N- to C-terminus: MKANELREKSAEELNTELLNLLREQFNLRMQASSGQLQQTHLLKQVRRNVARVKTLLTEKAGA.

It belongs to the universal ribosomal protein uL29 family.

This is Large ribosomal subunit protein uL29 from Sodalis glossinidius (strain morsitans).